The chain runs to 191 residues: UPF0312 protein PA0423 (191 aa).

The N-terminal stretch at 1-23 (MLKKTLAALALGSALFTAGQAMA) is a signal peptide.

It belongs to the UPF0312 family. Type 1 subfamily.

The protein resides in the periplasm. This Pseudomonas aeruginosa (strain ATCC 15692 / DSM 22644 / CIP 104116 / JCM 14847 / LMG 12228 / 1C / PRS 101 / PAO1) protein is UPF0312 protein PA0423.